The chain runs to 525 residues: MATLLRSLALFKRNKDKPPITSGSGGAIRGIKHIIIVPIPGDSSITTRSRLLDRLVRLIGNPDVSGPKLTGALIGILSLFVESPGQLIQRITDDPDVSIRLLEVVQSDQSQSGLTFASRGTNMEDEADQYFSHDDPSSSDQPRFGWFENKEISDIEVQDPEGFNMILGTILAQIWVLLAKAVTAPDTAADSELRRWIKYTQQRRVVGEFRLERKWLDVVRNRIAEDLSLRRFMVALIQDIKRTPGNKPRIAEMICDIDTYIVEAGLASFILTIKFGIETMYPALGLHEFAGELSTLESLMNLYQQMGETAPYMVILENSIQNKFSAGSYPLLWSYAMGVGVELENSMGGLNFGRSYFDPAYFRLGQEMVRRSAGKVSSTLASELGITAEDARLVSEIAMHTTEDRISRAVGPRQAQVSFLHGDQSENELPRWEGKEDMRVKQSRGEARESYRETGPSRASDARAAHLPTDTPLDIDTASEPSQDPQDSRRSAEALLRLQAMAGISEEQGSDTDTPRVYNDRDLLE.

Positions M1–I36 are homomultimerization. The interval M1–K375 is RNA packaging and organization of the helical nucleocapsid. Residues M1–E403 form a ncore region. Positions T70–L77 match the Nuclear localization signal motif. RNA-binding residues include K180, R195, Q202, and Y260. A Phosphothreonine; by host modification is found at T279. Residue N351 coordinates RNA. The interval A373–A391 is homomultimerization. A ntail region spans residues D404–E525. Residues S418–E525 are disordered. A Nuclear export signal motif is present at residues S425–V440. A compositionally biased stretch (basic and acidic residues) spans E428–R452. Residues T477 to S505 form an interaction with the phosphoprotein region.

Belongs to the paramyxoviruses nucleocapsid family. As to quaternary structure, homomultimer; forms the nucleocapsid. Binds to viral genomic RNA. N0 interacts (via Ncore) with the phosphoprotein (via N-terminus); this interaction allows P to chaperon N0 to avoid N polymerization and non-specific RNA binding before encapsidation. Interacts (via the Ntail) as N-RNA template with the phosphoprotein (via C-terminus XD); this interaction maintains the P/L complex anchored to the nucleocapsid template during the sequential transcription. Interacts with the phosphoprotein; this interaction leads to the formation of membraneless organelles that function as viral replication factories. Interacts with human FCGR2B protein. Interacts with human PPIA/CYPA and PPIB/CYPB. In terms of processing, phosphorylation at Thr-279 is required for the formation of the nucleocapsid.

The protein resides in the virion. It localises to the host cytoplasm. The protein localises to the host nucleus. Functionally, forms the helical nucleocapsid (NC) in a ratio of 1 N per 6 ribonucleotides, protecting the genome from nucleases. The nucleocapsid (NC) has a helical structure with either 12.35 or 11.64 N per turn, approximately 20 nm in diameter, with a hollow central cavity approximately 5 nm in diameter. The encapsidated genomic RNA serves as template for transcription and replication; encapsidation by N is coupled to RNA synthesis. Forms the encapsidation complex with the phosphoprotein protein P. Before encapsidation, the newly synthesized free N protein, so-called N0, is chaperoned by P. Participates, together with P, in the formation of viral factories (viroplasms), which are large inclusions in the host cytoplasm where replication takes place. N is released in the blood following lysis of measles infected cells, it interacts then with human FCGR2B on immune cells, inducing apoptosis and blocking inflammatory immune response. In Homo sapiens (Human), this protein is Nucleoprotein (N).